The sequence spans 96 residues: uncharacterized protein (96 aa).

3 consecutive transmembrane segments (helical) span residues 2 to 22 (FIFN…ICYF), 38 to 58 (AGLK…TVML), and 68 to 88 (LTLA…QLIV).

Its subcellular location is the membrane. This is an uncharacterized protein from Schizosaccharomyces pombe (strain 972 / ATCC 24843) (Fission yeast).